Consider the following 573-residue polypeptide: MLTNLEIARGAKLLPIEEVGRSMGLREERHLEPYGRHVAKVDLCAIEDLSERPKAKYILVSAITPTPLGEGKTTTTVGLGQAFSHIGKRATIAIRQASMGPAFGIKGGAAGGGYSQVVPMERLNLHLTGDLHAVTEAHNMLAAMIDNHLYHGNGLGIEPHSISWRRVMDVNDRSLRNIVIGLGARTDGVPRQSGFDITAASEVMAILALASSLEDLRERLGRIVIGHNREGNPVSAEDVRGAGAMAVILKEAIKPNLMQTLEGTPALVHAGPFGNIATGNSSVVADLIGIRTADYLITEAGFGADMGAERFFNIKCRISGLEPDAAVVVATVRALKAHSGRYQIKAGAPLPEELLEENPQDVLAGAENLKKQIENIKLHGVPAVVAINAFPTDHPSEHKAIEEAAKEVGARCAVCRHFTEGGKGAVELARALEETIEENERERRRGGGGSFRFLYPLEMPLKQKIETIAREVYGAEGVEYDAEALRALEGFERAGFGRLPVCLAKTHLSLSSDPALKGAPRGWKLSVREVRASVGAGFIYPICGQMRTMPGLSAHPAAERIDLDGEGNVVGLF.

Position 66–73 (66–73) interacts with ATP; that stretch reads TPLGEGKT.

This sequence belongs to the formate--tetrahydrofolate ligase family.

It carries out the reaction (6S)-5,6,7,8-tetrahydrofolate + formate + ATP = (6R)-10-formyltetrahydrofolate + ADP + phosphate. It participates in one-carbon metabolism; tetrahydrofolate interconversion. The protein is Formate--tetrahydrofolate ligase 3 of Rubrobacter xylanophilus (strain DSM 9941 / JCM 11954 / NBRC 16129 / PRD-1).